Consider the following 314-residue polypeptide: Methionyl-tRNA formyltransferase (314 aa).

(6S)-5,6,7,8-tetrahydrofolate is bound at residue Ser-111–Pro-114.

The protein belongs to the Fmt family.

It carries out the reaction L-methionyl-tRNA(fMet) + (6R)-10-formyltetrahydrofolate = N-formyl-L-methionyl-tRNA(fMet) + (6S)-5,6,7,8-tetrahydrofolate + H(+). Functionally, attaches a formyl group to the free amino group of methionyl-tRNA(fMet). The formyl group appears to play a dual role in the initiator identity of N-formylmethionyl-tRNA by promoting its recognition by IF2 and preventing the misappropriation of this tRNA by the elongation apparatus. This chain is Methionyl-tRNA formyltransferase, found in Chlorobium luteolum (strain DSM 273 / BCRC 81028 / 2530) (Pelodictyon luteolum).